The following is a 204-amino-acid chain: Intraflagellar transport protein 27 (204 aa).

Residues 23 to 30, 75 to 79, and 136 to 139 each bind GTP; these read GEATVGKS, DTAGS, and NKTD.

The protein belongs to the small GTPase superfamily. Rab family. Component of the IFT complex B, the core composed of IFT25, IFT27, IFT46, IFT52, IFT74, IFT81 and IFT88 as well as associated subunits IFT20, IFT57, IFT80 and IFT172. Interacts with IFT25; the interaction is direct.

The protein localises to the cell projection. The protein resides in the cilium. It is found in the flagellum. Its subcellular location is the cytoplasm. It localises to the cytoskeleton. The protein localises to the flagellum basal body. Small GTPase-like component of the intraflagellar transport (IFT) complex B. Forms a subcomplex within the IFT complex B with IFT25. Has very low GTPase activity either because it lacks the conserved catalytic Gln in position 79 or because it requires some GTPase-activating protein (GAP) for GTP turnover. The chain is Intraflagellar transport protein 27 (IFT27) from Chlamydomonas reinhardtii (Chlamydomonas smithii).